The primary structure comprises 808 residues: MTSSVRNGSPSPSPALPSTTTPAEQESRNAMTMANNPGDWDSSESRPQSLSNGKGIGNGMVANGHQKPSTSSTAASANNASAKDPLRPRRKKAKRACFACQRAHLTCGDERPCQRCIKRGLQDTCHDGVRKKAKYLHDAPNEALIPGIRGNLYNQAQAARNKVNSNSQQRNGTNSNSDNNSTNTNSNNKPSHQDVSTNFFSTPSANNYHNVYTQAKSRQSQHMPSRVMQDATMNPSAFQAQPPASPTFDLSSNPQNHTLSPSIAQNSGTTPSSSASQNPDPYGSTFFDPSHPALFNFDIASMNFGNRYGALEFGMLGHLATGAGDTPPSDTATRRGSIGRSSGTFTVQNFGEGSSNQSPFLFGGDPVLNDWNPAGQGPTNPRNIYNQNSVSGQMTDHPHAFAIESAPMNFASPTSTESPQMTTVTQFDDPSVNFSSRTTLMPPTNTQHQQQPQPPRISTPSLKNMQVGVKRRYRSPSSIYESVKEPYSYTSGFHSLTAFIQRRFSPQKTLQIAKALASIRPSFIATTKTLNQDDLIFMEKCFQRTLWEYEDFIDACGTPTIVCRRTGEIAAVGKEFSILTGWKKEVLLGKEPNLNVNTGGSSSSGVSSRGSSTYNSRNSATTTVMDNQSLPAGRTQPVFLAELLDDDSVIEFYEDFAKLAFGDSRGSVMTTCKLLKYKTKEDGVGLFRNSNGEVSAGGGDTDANDSAGAGVGDGTTTAVNGVSNGSSNNATNVNANGNVNVIPNDLSGASSMKSSPKQAWGKSRIAGEAGMNQLGFRDGKVECSYCWTVKRDVFDIPMLIVMNFLPCI.

The interval 1-90 (MTSSVRNGSP…SAKDPLRPRR (90 aa)) is disordered. Low complexity predominate over residues 69–83 (STSSTAASANNASAK). A DNA-binding region (zn(2)-C6 fungal-type) is located at residues 97–125 (CFACQRAHLTCGDERPCQRCIKRGLQDTC). Polar residues predominate over residues 158 to 170 (AARNKVNSNSQQR). Disordered regions lie at residues 158–203 (AARN…FSTP), 236–285 (SAFQ…YGST), 322–387 (GAGD…IYNQ), 442–461 (PPTN…STPS), and 598–629 (TGGS…DNQS). The segment covering 171–188 (NGTNSNSDNNSTNTNSNN) has biased composition (low complexity). Composition is skewed to polar residues over residues 189–203 (KPSH…FSTP), 248–279 (FDLS…SQNP), 339–359 (GRSS…NQSP), and 377–387 (GPTNPRNIYNQ). 2 stretches are compositionally biased toward low complexity: residues 442-451 (PPTNTQHQQQ) and 598-619 (TGGS…SRNS). A compositionally biased stretch (polar residues) spans 620 to 629 (ATTTVMDNQS).

It belongs to the ERT1/acuK family.

The protein localises to the nucleus. Transcription factor which regulates nonfermentable carbon utilization. Activator of gluconeogenetic genes. In Paracoccidioides lutzii (strain ATCC MYA-826 / Pb01) (Paracoccidioides brasiliensis), this protein is Transcription activator of gluconeogenesis PAAG_01030.